The chain runs to 339 residues: Biotin synthase (339 aa).

One can recognise a Radical SAM core domain in the interval 55 to 282 (NAVQLSTLLS…KAVVRLSAGR (228 aa)). [4Fe-4S] cluster contacts are provided by Cys-70, Cys-74, and Cys-77. Positions 114, 145, 205, and 277 each coordinate [2Fe-2S] cluster.

It belongs to the radical SAM superfamily. Biotin synthase family. In terms of assembly, homodimer. Requires [4Fe-4S] cluster as cofactor. [2Fe-2S] cluster is required as a cofactor.

It catalyses the reaction (4R,5S)-dethiobiotin + (sulfur carrier)-SH + 2 reduced [2Fe-2S]-[ferredoxin] + 2 S-adenosyl-L-methionine = (sulfur carrier)-H + biotin + 2 5'-deoxyadenosine + 2 L-methionine + 2 oxidized [2Fe-2S]-[ferredoxin]. It participates in cofactor biosynthesis; biotin biosynthesis; biotin from 7,8-diaminononanoate: step 2/2. Its function is as follows. Catalyzes the conversion of dethiobiotin (DTB) to biotin by the insertion of a sulfur atom into dethiobiotin via a radical-based mechanism. The polypeptide is Biotin synthase (Burkholderia ambifaria (strain MC40-6)).